Consider the following 427-residue polypeptide: 3-phosphoshikimate 1-carboxyvinyltransferase (427 aa).

Residue lysine 20 participates in phosphoenolpyruvate binding. 2 residues coordinate 3-phosphoshikimate: serine 21 and arginine 25. Glycine 92 and arginine 120 together coordinate phosphoenolpyruvate. 3-phosphoshikimate-binding residues include serine 166, alanine 167, glutamine 168, aspartate 312, and lysine 339. Glutamine 168 contacts phosphoenolpyruvate. The active-site Proton acceptor is the aspartate 312. Positions 343 and 385 each coordinate phosphoenolpyruvate.

As to quaternary structure, homotetramer.

Its subcellular location is the cytoplasm. It carries out the reaction 3-phosphoshikimate + phosphoenolpyruvate = 5-O-(1-carboxyvinyl)-3-phosphoshikimate + phosphate. Its pathway is metabolic intermediate biosynthesis; chorismate biosynthesis; chorismate from D-erythrose 4-phosphate and phosphoenolpyruvate: step 6/7. With respect to regulation, competitively inhibited by glyphosate. Activated by ammonium, rubidium or potassium ions. Functionally, catalyzes the transfer of the enolpyruvyl moiety of phosphoenolpyruvate (PEP) to the 5-hydroxyl of shikimate-3-phosphate (S3P) to produce enolpyruvyl shikimate-3-phosphate and inorganic phosphate. The sequence is that of 3-phosphoshikimate 1-carboxyvinyltransferase from Streptococcus pneumoniae serotype 4 (strain ATCC BAA-334 / TIGR4).